Consider the following 327-residue polypeptide: AA9 family lytic polysaccharide monooxygenase B (327 aa).

The N-terminal stretch at 1–19 (MKSFTATALAALLAQQAAA) is a signal peptide. Residues His-20 and His-98 each coordinate Cu(2+). Residues Cys-68 and Cys-192 are joined by a disulfide bond. The O2 site is built by His-178 and Gln-187. Residue Tyr-189 participates in Cu(2+) binding. Residues 264-280 (SPTTSLTPPVSTSTPAP) are compositionally biased toward low complexity. The tract at residues 264 to 284 (SPTTSLTPPVSTSTPAPGNGG) is disordered. One can recognise a CBM1 domain in the interval 291-327 (CTVQKYGQCGGQGYTGCTTCAAGSTCNTTNQWYHQCV). Asn-317 carries an N-linked (GlcNAc...) asparagine glycan.

The protein belongs to the polysaccharide monooxygenase AA9 family. Cu(2+) is required as a cofactor.

The protein resides in the secreted. It catalyses the reaction [(1-&gt;4)-beta-D-glucosyl]n+m + reduced acceptor + O2 = 4-dehydro-beta-D-glucosyl-[(1-&gt;4)-beta-D-glucosyl]n-1 + [(1-&gt;4)-beta-D-glucosyl]m + acceptor + H2O.. Functionally, lytic polysaccharide monooxygenase (LPMO) that depolymerizes crystalline and amorphous polysaccharides via the oxidation of scissile alpha- or beta-(1-4)-glycosidic bonds, yielding C1 or C4 oxidation products. Catalysis by LPMOs requires the reduction of the active-site copper from Cu(II) to Cu(I) by a reducing agent and H(2)O(2) or O(2) as a cosubstrate. This is AA9 family lytic polysaccharide monooxygenase B (LPMO9B) from Podospora anserina (strain S / ATCC MYA-4624 / DSM 980 / FGSC 10383) (Pleurage anserina).